The primary structure comprises 307 residues: MASNIRIIFYGTGGSWPTPLRAMPGVGVKIDDVLNLFDCGEGTQKQIMKSSTSFMDIDNIFITHFHGDHFLGLLGLVQSMSFNNRTKQLNIFGPHGAIKILSNALNVGYYTLHFPLKIYELEPDRTYDLGKFLIRTMLNDHPVPALSYSIEERDLVRIDPEKAREKNIPSRIIEKIRENGSYVYKGNEYRIDDIAGGVRKGRRIVYTGDTRPMDRMIEFARNADVLIHDTTTDSSFEPMVNEFGHSSSRQAARIARQARVGRLYLYHYSPRITDTSVLLEDARKEFQETYESKDLMEYEVKVRRDVD.

Zn(2+)-binding residues include His64, His66, Asp68, His69, His141, Asp209, and His267. Catalysis depends on Asp68, which acts as the Proton acceptor.

This sequence belongs to the RNase Z family. As to quaternary structure, homodimer. It depends on Zn(2+) as a cofactor.

The catalysed reaction is Endonucleolytic cleavage of RNA, removing extra 3' nucleotides from tRNA precursor, generating 3' termini of tRNAs. A 3'-hydroxy group is left at the tRNA terminus and a 5'-phosphoryl group is left at the trailer molecule.. Its function is as follows. Zinc phosphodiesterase, which displays some tRNA 3'-processing endonuclease activity. Probably involved in tRNA maturation, by removing a 3'-trailer from precursor tRNA. In Thermoplasma acidophilum (strain ATCC 25905 / DSM 1728 / JCM 9062 / NBRC 15155 / AMRC-C165), this protein is Ribonuclease Z.